The primary structure comprises 304 residues: D-alanine--D-alanine ligase (304 aa).

Residues 103-299 enclose the ATP-grasp domain; the sequence is KLIWQALGLP…FADLCIEILK (197 aa). 129–184 contributes to the ATP binding site; sequence EEKLGLPMFVKPAAEGSSVGVVKVKGKGRLKSVYEELKHFQGEIIAERFIGGGEYS. Mg(2+) is bound by residues D253, E266, and N268.

This sequence belongs to the D-alanine--D-alanine ligase family. Mg(2+) is required as a cofactor. It depends on Mn(2+) as a cofactor.

It localises to the cytoplasm. The enzyme catalyses 2 D-alanine + ATP = D-alanyl-D-alanine + ADP + phosphate + H(+). Its pathway is cell wall biogenesis; peptidoglycan biosynthesis. Cell wall formation. The chain is D-alanine--D-alanine ligase from Neisseria meningitidis serogroup A / serotype 4A (strain DSM 15465 / Z2491).